The sequence spans 361 residues: Queuine tRNA-ribosyltransferase (361 aa).

Residue D92 is the Proton acceptor of the active site. Substrate contacts are provided by residues 92-96 (DSGGF), D146, Q189, and G216. The RNA binding stretch occupies residues 247 to 253 (GVGKPAD). D266 acts as the Nucleophile in catalysis. Residues 271–275 (TRSGR) are RNA binding; important for wobble base 34 recognition. Zn(2+)-binding residues include C304, C306, C309, and H335.

It belongs to the queuine tRNA-ribosyltransferase family. As to quaternary structure, homodimer. Within each dimer, one monomer is responsible for RNA recognition and catalysis, while the other monomer binds to the replacement base PreQ1. It depends on Zn(2+) as a cofactor.

It carries out the reaction 7-aminomethyl-7-carbaguanine + guanosine(34) in tRNA = 7-aminomethyl-7-carbaguanosine(34) in tRNA + guanine. It functions in the pathway tRNA modification; tRNA-queuosine biosynthesis. Functionally, catalyzes the base-exchange of a guanine (G) residue with the queuine precursor 7-aminomethyl-7-deazaguanine (PreQ1) at position 34 (anticodon wobble position) in tRNAs with GU(N) anticodons (tRNA-Asp, -Asn, -His and -Tyr). Catalysis occurs through a double-displacement mechanism. The nucleophile active site attacks the C1' of nucleotide 34 to detach the guanine base from the RNA, forming a covalent enzyme-RNA intermediate. The proton acceptor active site deprotonates the incoming PreQ1, allowing a nucleophilic attack on the C1' of the ribose to form the product. After dissociation, two additional enzymatic reactions on the tRNA convert PreQ1 to queuine (Q), resulting in the hypermodified nucleoside queuosine (7-(((4,5-cis-dihydroxy-2-cyclopenten-1-yl)amino)methyl)-7-deazaguanosine). The protein is Queuine tRNA-ribosyltransferase of Rickettsia canadensis (strain McKiel).